Reading from the N-terminus, the 671-residue chain is Pescadillo homolog (671 aa).

A BRCT domain is found at 317 to 403; the sequence is KVRELFRGLT…LMLPVTGYRI (87 aa). Residues 548 to 584 adopt a coiled-coil conformation; the sequence is QALRKAQEKSRQTETSEARLQRKMSEVKRQEAATRKM. Disordered stretches follow at residues 552 to 578 and 643 to 671; these read KAQEKSRQTETSEARLQRKMSEVKRQE and RRQRAEAKSKKLKERKAGNPYKKLPKWVQ.

It belongs to the pescadillo family.

The protein localises to the nucleus. It is found in the nucleolus. The protein resides in the nucleoplasm. Functionally, required for maturation of ribosomal RNAs and formation of the large ribosomal subunit. The sequence is that of Pescadillo homolog from Leishmania infantum.